We begin with the raw amino-acid sequence, 89 residues long: Defensin-like protein 197 (89 aa).

The N-terminal stretch at 1–26 (MKFVSVFLVLFIFFLVVLEAPEKIEA) is a signal peptide. 4 cysteine pairs are disulfide-bonded: Cys33–Cys86, Cys46–Cys70, Cys55–Cys81, and Cys59–Cys83.

This sequence belongs to the DEFL family. Protease inhibitor I18 (RTI/MTI-2) subfamily.

It localises to the secreted. This is Defensin-like protein 197 (ATTI6) from Arabidopsis thaliana (Mouse-ear cress).